The chain runs to 231 residues: 5'-methylthioadenosine/S-adenosylhomocysteine nucleosidase (231 aa).

The Proton acceptor role is filled by Glu12. Residues Gly78, Val153, and 174–175 each bind substrate; that span reads ME. Asp198 acts as the Proton donor in catalysis.

The protein belongs to the PNP/UDP phosphorylase family. MtnN subfamily.

It catalyses the reaction S-adenosyl-L-homocysteine + H2O = S-(5-deoxy-D-ribos-5-yl)-L-homocysteine + adenine. The enzyme catalyses S-methyl-5'-thioadenosine + H2O = 5-(methylsulfanyl)-D-ribose + adenine. It carries out the reaction 5'-deoxyadenosine + H2O = 5-deoxy-D-ribose + adenine. It participates in amino-acid biosynthesis; L-methionine biosynthesis via salvage pathway; S-methyl-5-thio-alpha-D-ribose 1-phosphate from S-methyl-5'-thioadenosine (hydrolase route): step 1/2. Catalyzes the irreversible cleavage of the glycosidic bond in both 5'-methylthioadenosine (MTA) and S-adenosylhomocysteine (SAH/AdoHcy) to adenine and the corresponding thioribose, 5'-methylthioribose and S-ribosylhomocysteine, respectively. Also cleaves 5'-deoxyadenosine, a toxic by-product of radical S-adenosylmethionine (SAM) enzymes, into 5-deoxyribose and adenine. This is 5'-methylthioadenosine/S-adenosylhomocysteine nucleosidase from Vibrio vulnificus (strain CMCP6).